The sequence spans 340 residues: NADH-quinone oxidoreductase subunit H (340 aa).

The next 9 membrane-spanning stretches (helical) occupy residues 9-29 (IWIIIKIVLILVPLLVAVAFI), 81-101 (LIAPILSLVPALAAWAVIPFA), 113-133 (LLFLFAMTSLGVYGILVAGWA), 158-178 (GFALVGVLLAAGTMNLQGIVL), 184-204 (LWHWFWLPLLPLFVTYWITAV), 221-240 (IVAGFHVEYAGVTFALFFLA), 245-264 (MVLVSAIATVIFLGGWLSPF), 273-293 (LFAWVPGIVWFVLKLSLFIFT), and 316-336 (VLIPVTLVWIIILALAIEFHW).

Belongs to the complex I subunit 1 family. As to quaternary structure, NDH-1 is composed of 14 different subunits. Subunits NuoA, H, J, K, L, M, N constitute the membrane sector of the complex.

It is found in the cell inner membrane. The catalysed reaction is a quinone + NADH + 5 H(+)(in) = a quinol + NAD(+) + 4 H(+)(out). NDH-1 shuttles electrons from NADH, via FMN and iron-sulfur (Fe-S) centers, to quinones in the respiratory chain. The immediate electron acceptor for the enzyme in this species is believed to be ubiquinone. Couples the redox reaction to proton translocation (for every two electrons transferred, four hydrogen ions are translocated across the cytoplasmic membrane), and thus conserves the redox energy in a proton gradient. This subunit may bind ubiquinone. The chain is NADH-quinone oxidoreductase subunit H from Coxiella burnetii (strain CbuK_Q154) (Coxiella burnetii (strain Q154)).